Here is a 217-residue protein sequence, read N- to C-terminus: Adenylate kinase (217 aa).

ATP is bound at residue 10–15 (GAGKGT). Residues 30 to 59 (STGDMLREAVAKGTELGKKAKEYMDKGELV) are NMP. AMP-binding positions include Thr-31, Arg-36, 57–59 (ELV), 85–88 (GFPR), and Gln-92. An LID region spans residues 126-163 (YRRTCRNCGAVYHLIYAPPKEDNKCDKCGGELYQRDDD). Arg-127 contacts ATP. Zn(2+) is bound by residues Cys-130 and Cys-133. 136 to 137 (VY) lines the ATP pocket. Zn(2+) contacts are provided by Cys-150 and Cys-153. Residues Arg-160 and Arg-171 each contribute to the AMP site. Lys-199 is an ATP binding site.

It belongs to the adenylate kinase family. In terms of assembly, monomer.

Its subcellular location is the cytoplasm. It catalyses the reaction AMP + ATP = 2 ADP. The protein operates within purine metabolism; AMP biosynthesis via salvage pathway; AMP from ADP: step 1/1. Functionally, catalyzes the reversible transfer of the terminal phosphate group between ATP and AMP. Plays an important role in cellular energy homeostasis and in adenine nucleotide metabolism. The chain is Adenylate kinase from Archaeoglobus fulgidus (strain ATCC 49558 / DSM 4304 / JCM 9628 / NBRC 100126 / VC-16).